Consider the following 447-residue polypeptide: Argininosuccinate synthase (447 aa).

Residues 17–25 and Ala-43 each bind ATP; that span reads AFSGGLDTS. An L-citrulline-binding site is contributed by Tyr-99. 2 residues coordinate ATP: Gly-129 and Thr-131. Residues Thr-131, Asn-135, and Asp-136 each coordinate L-aspartate. Asn-135 contacts L-citrulline. Position 136 (Asp-136) interacts with ATP. The L-citrulline site is built by Arg-139 and Ser-192. Asp-194 serves as a coordination point for ATP. The L-citrulline site is built by Thr-201, Glu-203, and Glu-280.

This sequence belongs to the argininosuccinate synthase family. Type 2 subfamily. As to quaternary structure, homotetramer.

The protein localises to the cytoplasm. It catalyses the reaction L-citrulline + L-aspartate + ATP = 2-(N(omega)-L-arginino)succinate + AMP + diphosphate + H(+). It functions in the pathway amino-acid biosynthesis; L-arginine biosynthesis; L-arginine from L-ornithine and carbamoyl phosphate: step 2/3. The protein is Argininosuccinate synthase of Shigella flexneri serotype 5b (strain 8401).